The following is a 128-amino-acid chain: Aspartate 1-decarboxylase (128 aa).

Serine 25 functions as the Schiff-base intermediate with substrate; via pyruvic acid in the catalytic mechanism. Pyruvic acid (Ser) is present on serine 25. Threonine 57 provides a ligand contact to substrate. Tyrosine 58 functions as the Proton donor in the catalytic mechanism. Residue 73–75 (GSA) coordinates substrate.

It belongs to the PanD family. Heterooctamer of four alpha and four beta subunits. Requires pyruvate as cofactor. Post-translationally, is synthesized initially as an inactive proenzyme, which is activated by self-cleavage at a specific serine bond to produce a beta-subunit with a hydroxyl group at its C-terminus and an alpha-subunit with a pyruvoyl group at its N-terminus.

It localises to the cytoplasm. It carries out the reaction L-aspartate + H(+) = beta-alanine + CO2. The protein operates within cofactor biosynthesis; (R)-pantothenate biosynthesis; beta-alanine from L-aspartate: step 1/1. In terms of biological role, catalyzes the pyruvoyl-dependent decarboxylation of aspartate to produce beta-alanine. In Burkholderia thailandensis (strain ATCC 700388 / DSM 13276 / CCUG 48851 / CIP 106301 / E264), this protein is Aspartate 1-decarboxylase.